A 111-amino-acid chain; its full sequence is Universal stress protein B (111 aa).

2 helical membrane passes run 1-21 and 90-110; these read MIST…NMAR and FLLT…MMMW.

Belongs to the universal stress protein B family.

Its subcellular location is the cell inner membrane. In Pectobacterium atrosepticum (strain SCRI 1043 / ATCC BAA-672) (Erwinia carotovora subsp. atroseptica), this protein is Universal stress protein B.